The sequence spans 335 residues: Mitochondrial carrier protein CoAc2 (335 aa).

Helical transmembrane passes span 12–32 (SGPGLPLAVRELLAGGVAGGV), 75–95 (FYRGNGASVARIVPYAALHYM), 119–139 (LVAGSIAGGTAVICTYPLDLV), 187–207 (GMAPSLYGIFPYSGLKFYFYE), 225–242 (LGCGSVAGLLGQTITYPL), and 280–302 (LFSGLSINYLKVVPSVAIGFTVY). Solcar repeat units follow at residues 17-103 (PLAV…YRRW), 113-212 (QGPV…MKSH), and 219-308 (KGII…MKVC).

The protein belongs to the mitochondrial carrier (TC 2.A.29) family. In terms of tissue distribution, expressed throughout the plant.

The protein localises to the mitochondrion inner membrane. Functionally, required for the accumulation of coenzyme A in the mitochondrial matrix. This chain is Mitochondrial carrier protein CoAc2, found in Zea mays (Maize).